The primary structure comprises 312 residues: Tetraacyldisaccharide 4'-kinase (312 aa).

Position 60–67 (60–67 (IAGGSGKT)) interacts with ATP.

This sequence belongs to the LpxK family.

It catalyses the reaction a lipid A disaccharide + ATP = a lipid IVA + ADP + H(+). The protein operates within glycolipid biosynthesis; lipid IV(A) biosynthesis; lipid IV(A) from (3R)-3-hydroxytetradecanoyl-[acyl-carrier-protein] and UDP-N-acetyl-alpha-D-glucosamine: step 6/6. Functionally, transfers the gamma-phosphate of ATP to the 4'-position of a tetraacyldisaccharide 1-phosphate intermediate (termed DS-1-P) to form tetraacyldisaccharide 1,4'-bis-phosphate (lipid IVA). This chain is Tetraacyldisaccharide 4'-kinase, found in Helicobacter pylori (strain ATCC 700392 / 26695) (Campylobacter pylori).